The primary structure comprises 726 residues: Catalase-peroxidase 1 (726 aa).

Positions 1–33 are disordered; sequence MSTSDDIHNTTATGKCPFHQGGHDQSAGAGTTT. The segment at residues 105 to 226 is a cross-link (tryptophyl-tyrosyl-methioninium (Trp-Tyr) (with M-252)); that stretch reads WHGAGTYRSI…LGATEMGLIY (122 aa). His106 functions as the Proton acceptor in the catalytic mechanism. Residues 226–252 constitute a cross-link (tryptophyl-tyrosyl-methioninium (Tyr-Met) (with W-105)); sequence YVNPEGPDHSGEPLSAAAAIRATFGNM. His267 provides a ligand contact to heme b.

It belongs to the peroxidase family. Peroxidase/catalase subfamily. As to quaternary structure, homodimer or homotetramer. The cofactor is heme b. Formation of the three residue Trp-Tyr-Met cross-link is important for the catalase, but not the peroxidase activity of the enzyme.

The catalysed reaction is H2O2 + AH2 = A + 2 H2O. It catalyses the reaction 2 H2O2 = O2 + 2 H2O. Functionally, bifunctional enzyme with both catalase and broad-spectrum peroxidase activity. This is Catalase-peroxidase 1 from Escherichia coli O157:H7.